The chain runs to 222 residues: PLASMODESMATA CALLOSE-BINDING PROTEIN 4 (222 aa).

The N-terminal stretch at 1–19 (MSVLLPLCLIISMFTYSNA) is a signal peptide. A disulfide bridge connects residues C22 and C83. Residues 88–187 (AASPSTTPPS…SVFPGTTLGP (100 aa)) show a composition bias toward low complexity. Residues 88 to 199 (AASPSTTPPS…SGGLGDPNAG (112 aa)) form a disordered region. A lipid anchor (GPI-anchor amidated asparagine) is attached at N197. Residues 198–222 (AGEKLSVRTNTVVFLLTGVAAMLVI) constitute a propeptide, removed in mature form.

In terms of processing, contains two additional disulfide bonds.

It is found in the cell membrane. The protein localises to the cell junction. It localises to the plasmodesma. This is PLASMODESMATA CALLOSE-BINDING PROTEIN 4 (PDCB4) from Arabidopsis thaliana (Mouse-ear cress).